A 315-amino-acid chain; its full sequence is Protein ORANGE-LIKE, chloroplastic (315 aa).

Residues 1–16 (MTCFSSATPHRHHLLL) constitute a chloroplast transit peptide. The next 2 helical transmembrane spans lie at 155–175 (LYST…LIAP) and 207–227 (IVAS…LIEV). The CR-type zinc finger occupies 225-307 (IEVNNVKQQE…CTGMVTASEH (83 aa)). Residues 238-245 (CKYCLGTG) form a CXXCXGXG motif repeat. The stretch at 249-256 (CARCSASG) is one CXXCXXXG motif repeat. A CXXCXGXG motif repeat occupies 282–289 (CLNCSGAG). The CXXCXXXG motif repeat unit spans residues 293–300 (CPTCLCTG).

The protein belongs to the orange-like family. In terms of assembly, interacts with PSY1.

It localises to the plastid. The protein resides in the chloroplast membrane. In terms of biological role, may be associated with accumulation of carotenoids in chromoplasts. The chain is Protein ORANGE-LIKE, chloroplastic (ORLIKE) from Arabidopsis thaliana (Mouse-ear cress).